The following is a 105-amino-acid chain: Small ribosomal subunit protein uS10c (105 aa).

Belongs to the universal ribosomal protein uS10 family. As to quaternary structure, part of the 30S ribosomal subunit.

Its subcellular location is the plastid. The protein resides in the chloroplast. Its function is as follows. Involved in the binding of tRNA to the ribosomes. The polypeptide is Small ribosomal subunit protein uS10c (Porphyra purpurea (Red seaweed)).